We begin with the raw amino-acid sequence, 862 residues long: Eukaryotic translation initiation factor 3 subunit C (862 aa).

The segment covering 1–10 has biased composition (gly residues); sequence MSRFFYGGGS. Residues 1–81 are disordered; the sequence is MSRFFYGGGS…DEEKTTVVKS (81 aa). Positions 16–52 are enriched in acidic residues; it reads SSDEEELYERDEEEQSEEEESSEEEETSEEGSDDEEG. One can recognise a PCI domain in the interval 601-775; the sequence is FHMHINLELL…GAIVFRKGVE (175 aa). The tract at residues 814–862 is disordered; the sequence is RDQGAGARGGRGGGRGGHARGGARFPGQQGRRPGGQQFGGGALGGAIKA. The segment covering 819-833 has biased composition (gly residues); the sequence is GARGGRGGGRGGHAR. Positions 835–844 are enriched in low complexity; it reads GARFPGQQGR. Residues 845–862 show a composition bias toward gly residues; that stretch reads RPGGQQFGGGALGGAIKA.

Belongs to the eIF-3 subunit C family. In terms of assembly, component of the eukaryotic translation initiation factor 3 (eIF-3) complex.

It localises to the cytoplasm. Its function is as follows. Component of the eukaryotic translation initiation factor 3 (eIF-3) complex, which is involved in protein synthesis of a specialized repertoire of mRNAs and, together with other initiation factors, stimulates binding of mRNA and methionyl-tRNAi to the 40S ribosome. The eIF-3 complex specifically targets and initiates translation of a subset of mRNAs involved in cell proliferation. This chain is Eukaryotic translation initiation factor 3 subunit C (nip1), found in Aspergillus clavatus (strain ATCC 1007 / CBS 513.65 / DSM 816 / NCTC 3887 / NRRL 1 / QM 1276 / 107).